A 305-amino-acid polypeptide reads, in one-letter code: Protoheme IX farnesyltransferase (305 aa).

Transmembrane regions (helical) follow at residues 31 to 51 (VMSL…YSVH), 52 to 72 (PFIA…AGAI), 102 to 119 (ALSF…FMAL), 123 to 145 (LLAS…IWLK), 151 to 171 (NIVI…AAVS), 179 to 199 (IILF…LALF), 225 to 245 (ILIY…IGMN), 247 to 267 (FIYL…SGSL), and 284 to 304 (SIFY…ISLI).

This sequence belongs to the UbiA prenyltransferase family. Protoheme IX farnesyltransferase subfamily.

The protein resides in the cell inner membrane. The catalysed reaction is heme b + (2E,6E)-farnesyl diphosphate + H2O = Fe(II)-heme o + diphosphate. It participates in porphyrin-containing compound metabolism; heme O biosynthesis; heme O from protoheme: step 1/1. Its function is as follows. Converts heme B (protoheme IX) to heme O by substitution of the vinyl group on carbon 2 of heme B porphyrin ring with a hydroxyethyl farnesyl side group. This is Protoheme IX farnesyltransferase from Rickettsia felis (strain ATCC VR-1525 / URRWXCal2) (Rickettsia azadi).